The chain runs to 673 residues: Forkhead box protein O3 (673 aa).

Positions 1–153 (MAEAPASPAP…SGQPRKCSSR (153 aa)) are disordered. Serine 30 carries the phosphoserine; by AMPK modification. Threonine 32 carries the phosphothreonine; by PKB/AKT1 modification. An N6-methyllysine modification is found at lysine 46. The span at 57–68 (IPEEEDDEDDED) shows a compositional bias: acidic residues. Positions 79–89 (IGGGGGSGTLG) are enriched in gly residues. The segment at 80–108 (GGGGGSGTLGSGLLLEDSARVLAPGGQDP) is required for mitochondrial import. Residue lysine 149 is modified to N6-methyllysine. Positions 157–251 (WGNLSYADLI…KSGKAPRRRA (95 aa)) form a DNA-binding region, fork-head. A Phosphothreonine; by AMPK modification is found at threonine 179. A Phosphoserine; by STK4/MST1 modification is found at serine 209. Serine 215 bears the Phosphoserine; by MAPKAPK5 mark. N6-methyllysine is present on lysine 230. Residues 231 to 302 (SSWWIINPDG…GSPTSRSSDE (72 aa)) form a disordered region. The residue at position 242 (lysine 242) is an N6-acetyllysine. The Nuclear localization signal signature appears at 242–259 (KSGKAPRRRAVSMDNSNK). At serine 253 the chain carries Phosphoserine; by PKB/AKT1 and MAPKAPK5. The segment covering 261–272 (TKSRGRAAKKKA) has biased composition (basic residues). An N6-methyllysine mark is found at lysine 262 and lysine 271. Phosphoserine occurs at positions 280 and 284. The span at 283–298 (DSPSQLSKWPGSPTSR) shows a compositional bias: polar residues. Position 290 is an N6-methyllysine (lysine 290). Position 294 is a phosphoserine (serine 294). Serine 299 is subject to Phosphoserine; by CaMK2A. Residues 300–673 (SDELDAWTDF…QASSQSWVPG (374 aa)) are mediates interaction with CHUK/IKKA and IKBKB/IKKB. Serine 311 is modified (phosphoserine). At serine 315 the chain carries Phosphoserine; by SGK1. Serine 399 and serine 413 each carry phosphoserine; by AMPK. Position 419 is an N6-methyllysine (lysine 419). The residue at position 421 (serine 421) is a Phosphoserine. A disordered region spans residues 536–587 (HQHQTQGALGGSRALSNSVSNMGLSESSSLGSAKHQQQSPVSQSMQTLSDSL). Residues 549 to 582 (ALSNSVSNMGLSESSSLGSAKHQQQSPVSQSMQT) show a composition bias toward polar residues. A Phosphoserine; by MAPKAPK5 modification is found at serine 551. Serine 555 is subject to Phosphoserine; by AMPK and MAPKAPK5. 2 positions are modified to phosphoserine; by AMPK: serine 588 and serine 626. Serine 644 carries the post-translational modification Phosphoserine; by IKKB.

Upon metabolic stress, forms a complex composed of FOXO3, SIRT3 and mitochondrial RNA polymerase POLRMT; the complex is recruited to mtDNA in a SIRT3-dependent manner. Also forms a complex composed of FOXO3, SIRT3, TFAM and POLRMT. Interacts with SIRT2; the interaction occurs independently of SIRT2 deacetylase activity. Interacts with YWHAB/14-3-3-beta and YWHAZ/14-3-3-zeta, which are required for cytosolic sequestration. Upon oxidative stress, interacts with STK4/MST1, which disrupts interaction with YWHAB/14-3-3-beta and leads to nuclear translocation. Interacts with PIM1. Interacts with DDIT3/CHOP. Interacts (deacetylated form) with SKP2. Interacts with CHUK and IKBKB. Interacts with CAMK2A, CAMK2B and calcineurin A. Interacts with NUPR1; this interaction represses FOXO3 transactivation. In the presence of survival factors such as IGF1, phosphorylated on Thr-32 and Ser-253 by AKT1/PKB. This phosphorylated form then interacts with 14-3-3 proteins and is retained in the cytoplasm. Survival factor withdrawal induces dephosphorylation and promotes translocation to the nucleus where the dephosphorylated protein induces transcription of target genes and triggers apoptosis. Although AKT1/PKB doesn't appear to phosphorylate Ser-315 directly, it may activate other kinases that trigger phosphorylation at this residue. Phosphorylated by STK4/MST1 on Ser-209 upon oxidative stress, which leads to dissociation from YWHAB/14-3-3-beta and nuclear translocation. Phosphorylated by PIM1. Phosphorylation by AMPK leads to the activation of transcriptional activity without affecting subcellular localization. In response to metabolic stress, phosphorylated by AMPK on Ser-30 which mediates FOXO3 mitochondrial translocation. Phosphorylation by MAPKAPK5 promotes nuclear localization and DNA-binding, leading to induction of miR-34b and miR-34c expression, 2 post-transcriptional regulators of MYC that bind to the 3'UTR of MYC transcript and prevent its translation. Phosphorylated by CHUK/IKKA and IKBKB/IKKB. TNF-induced inactivation of FOXO3 requires its phosphorylation at Ser-644 by IKBKB/IKKB which promotes FOXO3 retention in the cytoplasm, polyubiquitination and ubiquitin-mediated proteasomal degradation. May be dephosphorylated by calcineurin A on Ser-299 which abolishes FOXO3 transcriptional activity. In cancer cells, ERK mediated-phosphorylation of Ser-12 is required for mitochondrial translocation of FOXO3 in response to metabolic stress or chemotherapeutic agents. Phosphorylation at Ser-253 promotes its degradation by the proteasome. Dephosphorylation at Ser-253 by protein phosphatase 2A (PPP2CA) promotes its stabilization; interaction with PPP2CA is enhanced by AMBRA1. In terms of processing, deacetylation by SIRT1 or SIRT2 stimulates interaction of FOXO3 with SKP2 and facilitates SCF(SKP2)-mediated FOXO3 ubiquitination and proteasomal degradation. Deacetylation by SIRT2 stimulates FOXO3-mediated transcriptional activity in response to oxidative stress. Deacetylated by SIRT3. Deacetylation by SIRT3 stimulates FOXO3-mediated mtDNA transcriptional activity in response to metabolic stress. Post-translationally, heavily methylated by SET9 which decreases stability, while moderately increasing transcriptional activity. The main methylation site is Lys-271. Methylation doesn't affect subcellular location. Polyubiquitinated. Ubiquitinated by a SCF complex containing SKP2, leading to proteasomal degradation. In terms of processing, the N-terminus is cleaved following import into the mitochondrion. As to expression, ubiquitous.

The protein resides in the cytoplasm. Its subcellular location is the cytosol. It localises to the nucleus. It is found in the mitochondrion matrix. The protein localises to the mitochondrion outer membrane. Its function is as follows. Transcriptional activator that recognizes and binds to the DNA sequence 5'-[AG]TAAA[TC]A-3' and regulates different processes, such as apoptosis and autophagy. Acts as a positive regulator of autophagy in skeletal muscle: in starved cells, enters the nucleus following dephosphorylation and binds the promoters of autophagy genes, such as GABARAP1L, MAP1LC3B and ATG12, thereby activating their expression, resulting in proteolysis of skeletal muscle proteins. Triggers apoptosis in the absence of survival factors, including neuronal cell death upon oxidative stress. Participates in post-transcriptional regulation of MYC: following phosphorylation by MAPKAPK5, promotes induction of miR-34b and miR-34c expression, 2 post-transcriptional regulators of MYC that bind to the 3'UTR of MYC transcript and prevent its translation. In response to metabolic stress, translocates into the mitochondria where it promotes mtDNA transcription. In response to metabolic stress, translocates into the mitochondria where it promotes mtDNA transcription. Also acts as a key regulator of chondrogenic commitment of skeletal progenitor cells in response to lipid availability: when lipids levels are low, translocates to the nucleus and promotes expression of SOX9, which induces chondrogenic commitment and suppresses fatty acid oxidation. Also acts as a key regulator of regulatory T-cells (Treg) differentiation by activating expression of FOXP3. This chain is Forkhead box protein O3, found in Homo sapiens (Human).